Here is a 1046-residue protein sequence, read N- to C-terminus: Nuclear pore complex protein NUP96 (1046 aa).

Residues 51–187 (SPDYFLKPCI…GLWKFFVPHF (137 aa)) enclose the Peptidase S59 domain. The span at 283 to 295 (RNVRPSQKIAQRN) shows a compositional bias: polar residues. Positions 283–304 (RNVRPSQKIAQRNSHQDPPPVV) are disordered. Serine 523 is subject to Phosphoserine.

As to quaternary structure, part of the nuclear pore complex (NPC). The NPC has an eight-fold symmetrical structure comprising a central transport channel and two rings, the cytoplasmic and nuclear rings, to which eight filaments are attached. The cytoplasmic filaments have loose ends, while the nuclear filaments are joined in a distal ring, forming a nuclear basket. NPCs are highly dynamic in configuration and composition, and can be devided in 3 subcomplexes, the NUP62 subcomplex, the NUP107-160 subcomplex and the NUP93 subcomplex, containing approximately 30 different nucleoporin proteins. Expressed in roots, leaves, stems, flowers and siliques.

Its subcellular location is the nucleus membrane. It localises to the nucleus. The protein localises to the nuclear pore complex. Its function is as follows. Contributes to the transfer of mature mRNA from the nucleus to the cytosol. Required for both R gene-mediated and basal disease resistance. RNA export seems to play a critical role in stress responses and regulation of plant growth and development. In Arabidopsis thaliana (Mouse-ear cress), this protein is Nuclear pore complex protein NUP96.